Consider the following 556-residue polypeptide: MASRRVLSSLLRSSSGRSAAKLGNRNPRLPSPSPARHAAPCSYLLGRVAEYATSSPASSAAPSSAPAKDEGKKTYDYGGKGAIGRVCQVIGAIVDVRFEDQEGLPPIMTSLEVQDHPTRLVLEVSHHLGQNVVRTIAMDGTEGLVRGRKVLNTGAPITVPVGRATLGRIMNVLGEPIDERGEIKTEHYLPIHRDAPALVDLATGQEILATGIKVVDLLAPYQRGGKIGLFGGAGVGKTVLIMELINNVAKAHGGFSVFAGVGERTREGNDLYREMIESGVIKLGEKQSESKCALVYGQMNEPPGARARVGLTGLTVAEYFRDAEGQDVLLFIDNIFRFTQANSEVSALLGRIPSAVGYQPTLASDLGALQERITTTKKGSITSVQAIYVPADDLTDPAPATTFAHLDATTVLSRQISELGIYPAVDPLDSTSRMLSPHILGEEHYNTARGVQKVLQNYKNLQDIIAILGMDELSEDDKLTVARARKIQRFLSQPFHVAEIFTGAPGKYVDLKENINSFQGLLDGKYDDLSEQSFYMVGGIDEVVAKAEKIAKESAA.

Residues 1–20 are compositionally biased toward low complexity; the sequence is MASRRVLSSLLRSSSGRSAA. The segment at 1–37 is disordered; it reads MASRRVLSSLLRSSSGRSAAKLGNRNPRLPSPSPARH. Residues 1–51 constitute a mitochondrion transit peptide; it reads MASRRVLSSLLRSSSGRSAAKLGNRNPRLPSPSPARHAAPCSYLLGRVAEY. The residue at position 59 (Ser59) is a Phosphoserine. 231 to 238 contacts ATP; the sequence is GGAGVGKT.

Belongs to the ATPase alpha/beta chains family. As to quaternary structure, F-type ATPases have 2 components, CF(1) - the catalytic core - and CF(0) - the membrane proton channel. CF(1) has five subunits: alpha(3), beta(3), gamma(1), delta(1), epsilon(1). CF(0) has three main subunits: a, b and c.

It is found in the mitochondrion. The protein resides in the mitochondrion inner membrane. The enzyme catalyses ATP + H2O + 4 H(+)(in) = ADP + phosphate + 5 H(+)(out). Mitochondrial membrane ATP synthase (F(1)F(0) ATP synthase or Complex V) produces ATP from ADP in the presence of a proton gradient across the membrane which is generated by electron transport complexes of the respiratory chain. F-type ATPases consist of two structural domains, F(1) - containing the extramembraneous catalytic core, and F(0) - containing the membrane proton channel, linked together by a central stalk and a peripheral stalk. During catalysis, ATP synthesis in the catalytic domain of F(1) is coupled via a rotary mechanism of the central stalk subunits to proton translocation. Subunits alpha and beta form the catalytic core in F(1). Rotation of the central stalk against the surrounding alpha(3)beta(3) subunits leads to hydrolysis of ATP in three separate catalytic sites on the beta subunits. The polypeptide is ATP synthase subunit beta-1, mitochondrial (Arabidopsis thaliana (Mouse-ear cress)).